Reading from the N-terminus, the 156-residue chain is Large ribosomal subunit protein uL22 (156 aa).

The protein belongs to the universal ribosomal protein uL22 family. In terms of assembly, part of the 50S ribosomal subunit.

In terms of biological role, this protein binds specifically to 23S rRNA. It makes multiple contacts with different domains of the 23S rRNA in the assembled 50S subunit and ribosome. Its function is as follows. The globular domain of the protein is located near the polypeptide exit tunnel on the outside of the subunit, while an extended beta-hairpin is found that lines the wall of the exit tunnel in the center of the 70S ribosome. The polypeptide is Large ribosomal subunit protein uL22 (Aeropyrum pernix (strain ATCC 700893 / DSM 11879 / JCM 9820 / NBRC 100138 / K1)).